A 211-amino-acid chain; its full sequence is Thymidylate kinase (211 aa).

An ATP-binding site is contributed by 7 to 14; sequence GIDGCGKT.

This sequence belongs to the thymidylate kinase family.

The enzyme catalyses dTMP + ATP = dTDP + ADP. In terms of biological role, phosphorylation of dTMP to form dTDP in both de novo and salvage pathways of dTTP synthesis. In Anaplasma marginale (strain Florida), this protein is Thymidylate kinase.